We begin with the raw amino-acid sequence, 310 residues long: Acetylglutamate kinase (310 aa).

Substrate is bound by residues 76–77, arginine 98, and asparagine 203; that span reads GG.

Belongs to the acetylglutamate kinase family. ArgB subfamily.

Its subcellular location is the cytoplasm. It carries out the reaction N-acetyl-L-glutamate + ATP = N-acetyl-L-glutamyl 5-phosphate + ADP. The protein operates within amino-acid biosynthesis; L-arginine biosynthesis; N(2)-acetyl-L-ornithine from L-glutamate: step 2/4. Functionally, catalyzes the ATP-dependent phosphorylation of N-acetyl-L-glutamate. In Cutibacterium acnes (strain DSM 16379 / KPA171202) (Propionibacterium acnes), this protein is Acetylglutamate kinase.